Consider the following 100-residue polypeptide: MLVMNLQLFAHKKGVGSSKNGRDSEAKRLGVKCSDGQFVLAGNILVRQRGTKIHPGLNVGRGGDDTLFAKIDGVVKYERLGRDKKKASVYPVEVEEVVAE.

The propeptide occupies 1–9 (MLVMNLQLF).

It belongs to the bacterial ribosomal protein bL27 family. The N-terminus is cleaved by ribosomal processing cysteine protease Prp.

This chain is Large ribosomal subunit protein bL27, found in Clostridium botulinum (strain Hall / ATCC 3502 / NCTC 13319 / Type A).